The chain runs to 250 residues: UPF0259 membrane protein bbp_256 (250 aa).

Transmembrane regions (helical) follow at residues 21-41 (PIIVTFVLLSSTITVVIDSII), 86-106 (FSLLIGSTFLLGNLITFIQMT), 125-145 (FFKLLQLIFTTTIITQLGFLL), 146-166 (YFIPGFTTIILFSLSPIILLI), 188-208 (IIVPAIIFWLCFKIFIILIIS), and 216-236 (FLAYFILNLCINFISSILIIY).

Belongs to the UPF0259 family.

The protein localises to the cell membrane. This is UPF0259 membrane protein bbp_256 from Buchnera aphidicola subsp. Baizongia pistaciae (strain Bp).